The chain runs to 402 residues: Acetyl-CoA acetyltransferase (402 aa).

The active-site Acyl-thioester intermediate is the Cys-90. CoA contacts are provided by Tyr-185 and Lys-230. Tyr-185 contacts K(+). Ala-250 contributes to the K(+) binding site. Ser-251 is a binding site for CoA. Val-348 contributes to the K(+) binding site. Active-site proton acceptor residues include His-352 and Cys-382.

This sequence belongs to the thiolase-like superfamily. Thiolase family. In terms of assembly, homotetramer.

It is found in the cytoplasm. The protein resides in the cytosol. It carries out the reaction 2 acetyl-CoA = acetoacetyl-CoA + CoA. It functions in the pathway metabolic intermediate biosynthesis; (R)-mevalonate biosynthesis; (R)-mevalonate from acetyl-CoA: step 1/3. In terms of biological role, acetyl-CoA acetyltransferase; part of the first module of ergosterol biosynthesis pathway that includes the early steps of the pathway, conserved across all eukaryotes, and which results in the formation of mevalonate from acetyl-coenzyme A (acetyl-CoA). ERG10 catalyzes the formation of acetoacetyl-CoA from acetyl-CoA. The first module starts with the action of the cytosolic acetyl-CoA acetyltransferase ERG10 that catalyzes the formation of acetoacetyl-CoA. The hydroxymethylglutaryl-CoA synthase ERG13 then condenses acetyl-CoA with acetoacetyl-CoA to form HMG-CoA. The 3-hydroxy-3-methylglutaryl-coenzyme A (HMG-CoA) reductase HMG1 finally reduces HMG-CoA to produce mevalonate. The protein is Acetyl-CoA acetyltransferase of Candida albicans (strain SC5314 / ATCC MYA-2876) (Yeast).